An 865-amino-acid chain; its full sequence is MNSNQLRETFLNYFKQLDHEVVPGSSLIPENDPTLLFTNAGMVQFKDVFLGVETRPYQRAVSIQPCMRAGGKHNDLENVGYTARHHTFFEMLGNFSFGDYFKRDAIKFAWDFLTNVLKLPPQRLWVTVFQDDFESESIWLKEMKINPERFSRCGEKDNFWQMRDTGPCGPCTEIFYDHGPTISGGPPGSAEADGDRYVEIWNLVFMQYNRDAKGNLLPLAKPSVDTGMGLERLTAVMQGVHDNYDIDLFQYLLKALRTLLKTEDLHNTSMRVIVDHIRSVAFLIADGVIPSNEGRGYVLRRIIRRAVRHGYKLGQEEPFFYQLTKPLLEEMGGAYPLLRKSQALIEQTIKQEEIQFSNTLTKGLKILDHEMAGLPSRQIPGNLIFQLYDTYGFPPDLTADIARERDFVMDYAGFDKAMERQREQSQQAHQFVANYAQKASIGGETQFVGYETLNSQANVISLLQNDQPINRLNESEKGVVVLDRTPFYAESGGQVGDQGFLYFEKGSFRVKDTKKQGDIYLHIGEMLQGHLNVKDKVRAEVDVSRFDIMRNHSATHLLHEALRRVLGERVMQKGSLVEAKRLRFDFSHAKPLTPEELQAVERLVNQQIQANLLSTIEVMTPEEAKKKGALALFGERYGKEVRVLEMGDFSTEICGGTHTERTGEIGLFKIVSESGCAAGIRRIEALTGKAALDYIESAEQQLRSLSDLLKTNRKNLAAKLSQILEDHRKLEKELAKLKQRLASQQLESLINQVVDVHDIRTLAIRLEAVDRETLRAIVDQLKQKLGKAAIVLATIEEGRIQLVAGVTKNCLEHFNATELLAPIAEKVGGRSGGRPDLAQGAGERPENLEAALAAVPKWIEKKLKE.

Zn(2+) contacts are provided by histidine 552, histidine 556, cysteine 654, and histidine 658.

This sequence belongs to the class-II aminoacyl-tRNA synthetase family. The cofactor is Zn(2+).

The protein localises to the cytoplasm. The catalysed reaction is tRNA(Ala) + L-alanine + ATP = L-alanyl-tRNA(Ala) + AMP + diphosphate. In terms of biological role, catalyzes the attachment of alanine to tRNA(Ala) in a two-step reaction: alanine is first activated by ATP to form Ala-AMP and then transferred to the acceptor end of tRNA(Ala). Also edits incorrectly charged Ser-tRNA(Ala) and Gly-tRNA(Ala) via its editing domain. This Coxiella burnetii (strain RSA 331 / Henzerling II) protein is Alanine--tRNA ligase.